Consider the following 456-residue polypeptide: Histidinol dehydrogenase homolog (456 aa).

His-279 is a binding site for Zn(2+). Active-site proton acceptor residues include Glu-347 and His-348. A Zn(2+)-binding site is contributed by His-440.

The protein belongs to the histidinol dehydrogenase family. It depends on Zn(2+) as a cofactor.

The polypeptide is Histidinol dehydrogenase homolog (Rhizobium meliloti (strain 1021) (Ensifer meliloti)).